Reading from the N-terminus, the 402-residue chain is Zinc finger CCHC domain-containing protein 12 (402 aa).

The segment at M1–P20 is disordered. A CCHC-type zinc finger spans residues I346 to N363. A disordered region spans residues H383–Q402.

This sequence belongs to the ZCCHC12 family. In terms of assembly, interacts with SMAD1 and CREB-binding protein (CBP). Forms a protein-DNA complex through its association with SMAD1. As to expression, in embryonic brains expression is restricted to the ventral region of the forebrain, including the septum, amygdala, caudal putamen, and in the basal-forebrain cholinergic neurons. In adults, expressed in the brain, and at low levels in the testis.

Functionally, transcriptional coactivator in the bone morphogenetic protein (BMP)-signaling pathway. It positively modulates BMP signaling by interacting with SMAD1 and associating with CBP in the transcription complex. It contributes to the BMP-induced enhancement of cholinergic-neuron-specific gene expression. The polypeptide is Zinc finger CCHC domain-containing protein 12 (Zcchc12) (Mus musculus (Mouse)).